We begin with the raw amino-acid sequence, 358 residues long: Fructose-bisphosphate aldolase (358 aa).

Serine 62 contacts D-glyceraldehyde 3-phosphate. Aspartate 109 serves as the catalytic Proton donor. Zn(2+) contacts are provided by histidine 110, aspartate 144, glutamate 174, and histidine 226. Position 227 (glycine 227) interacts with dihydroxyacetone phosphate. Residue histidine 264 participates in Zn(2+) binding. Residues 265 to 267 (GGS) and 286 to 289 (NIDT) contribute to the dihydroxyacetone phosphate site.

It belongs to the class II fructose-bisphosphate aldolase family. Zn(2+) serves as cofactor.

The catalysed reaction is beta-D-fructose 1,6-bisphosphate = D-glyceraldehyde 3-phosphate + dihydroxyacetone phosphate. The protein operates within carbohydrate degradation; glycolysis; D-glyceraldehyde 3-phosphate and glycerone phosphate from D-glucose: step 4/4. In terms of biological role, catalyzes the aldol condensation of dihydroxyacetone phosphate (DHAP or glycerone-phosphate) with glyceraldehyde 3-phosphate (G3P) to form fructose 1,6-bisphosphate (FBP) in gluconeogenesis and the reverse reaction in glycolysis. This is Fructose-bisphosphate aldolase (fba) from Edwardsiella ictaluri (strain 93-146).